Consider the following 359-residue polypeptide: 4-hydroxy-3-methylbut-2-en-1-yl diphosphate synthase (flavodoxin) (359 aa).

Residues C264, C267, C299, and E306 each contribute to the [4Fe-4S] cluster site.

It belongs to the IspG family. It depends on [4Fe-4S] cluster as a cofactor.

The catalysed reaction is (2E)-4-hydroxy-3-methylbut-2-enyl diphosphate + oxidized [flavodoxin] + H2O + 2 H(+) = 2-C-methyl-D-erythritol 2,4-cyclic diphosphate + reduced [flavodoxin]. Its pathway is isoprenoid biosynthesis; isopentenyl diphosphate biosynthesis via DXP pathway; isopentenyl diphosphate from 1-deoxy-D-xylulose 5-phosphate: step 5/6. Its function is as follows. Converts 2C-methyl-D-erythritol 2,4-cyclodiphosphate (ME-2,4cPP) into 1-hydroxy-2-methyl-2-(E)-butenyl 4-diphosphate. In Helicobacter pylori (strain HPAG1), this protein is 4-hydroxy-3-methylbut-2-en-1-yl diphosphate synthase (flavodoxin).